The sequence spans 271 residues: Putative phosphoenolpyruvate synthase regulatory protein (271 aa).

152–159 contacts ADP; it reads GVSRCGKT.

The protein belongs to the pyruvate, phosphate/water dikinase regulatory protein family. PSRP subfamily.

The catalysed reaction is [pyruvate, water dikinase] + ADP = [pyruvate, water dikinase]-phosphate + AMP + H(+). It carries out the reaction [pyruvate, water dikinase]-phosphate + phosphate + H(+) = [pyruvate, water dikinase] + diphosphate. Its function is as follows. Bifunctional serine/threonine kinase and phosphorylase involved in the regulation of the phosphoenolpyruvate synthase (PEPS) by catalyzing its phosphorylation/dephosphorylation. The sequence is that of Putative phosphoenolpyruvate synthase regulatory protein from Legionella pneumophila (strain Lens).